Here is a 142-residue protein sequence, read N- to C-terminus: MNVPSSAERWRSAMLYAWVSAGSVVGGLTRYLVGLALDTGPGFPFATLFINATGSLIIGFYATLTGPDGRMLARPEHRQFVMTGFCGGYTTFSAFSLETFRLFHGGMKYIALAYVASSVVCWLVSVWLGHIMASRYNRLKRS.

4 helical membrane-spanning segments follow: residues 17-37 (AWVS…GLAL), 42-62 (GFPF…GFYA), 80-100 (FVMT…LETF), and 109-129 (YIAL…VWLG). Na(+)-binding residues include Gly87 and Thr90.

It belongs to the fluoride channel Fluc/FEX (TC 1.A.43) family.

It localises to the cell inner membrane. It catalyses the reaction fluoride(in) = fluoride(out). Its activity is regulated as follows. Na(+) is not transported, but it plays an essential structural role and its presence is essential for fluoride channel function. In terms of biological role, fluoride-specific ion channel. Important for reducing fluoride concentration in the cell, thus reducing its toxicity. In Bradyrhizobium diazoefficiens (strain JCM 10833 / BCRC 13528 / IAM 13628 / NBRC 14792 / USDA 110), this protein is Fluoride-specific ion channel FluC 1.